The sequence spans 312 residues: Ribosomal protein L11 methyltransferase (312 aa).

S-adenosyl-L-methionine-binding residues include Thr162, Gly183, Asp205, and Asn248.

This sequence belongs to the methyltransferase superfamily. PrmA family.

The protein localises to the cytoplasm. The enzyme catalyses L-lysyl-[protein] + 3 S-adenosyl-L-methionine = N(6),N(6),N(6)-trimethyl-L-lysyl-[protein] + 3 S-adenosyl-L-homocysteine + 3 H(+). Methylates ribosomal protein L11. In Bacillus cereus (strain G9842), this protein is Ribosomal protein L11 methyltransferase.